A 65-amino-acid polypeptide reads, in one-letter code: Sec-independent protein translocase protein TatA (65 aa).

A helical membrane pass occupies residues 9-29 (ILIIVLLVVVVFGVGKLPQVG). The segment at 40–65 (RKASTGEDAKEEVETKEETKPAEKSE) is disordered. Residues 43-65 (STGEDAKEEVETKEETKPAEKSE) show a composition bias toward basic and acidic residues.

The protein belongs to the TatA/E family. Forms a complex with TatC.

It localises to the cell membrane. In terms of biological role, part of the twin-arginine translocation (Tat) system that transports large folded proteins containing a characteristic twin-arginine motif in their signal peptide across membranes. TatA could form the protein-conducting channel of the Tat system. The polypeptide is Sec-independent protein translocase protein TatA (Dehalococcoides mccartyi (strain ATCC BAA-2100 / JCM 16839 / KCTC 5957 / BAV1)).